The sequence spans 316 residues: 4-diphosphocytidyl-2-C-methyl-D-erythritol kinase (316 aa).

Residue K23 is part of the active site. Residue 108–118 (PVAGGMAGGSA) coordinates ATP. The active site involves D150.

The protein belongs to the GHMP kinase family. IspE subfamily.

The enzyme catalyses 4-CDP-2-C-methyl-D-erythritol + ATP = 4-CDP-2-C-methyl-D-erythritol 2-phosphate + ADP + H(+). It participates in isoprenoid biosynthesis; isopentenyl diphosphate biosynthesis via DXP pathway; isopentenyl diphosphate from 1-deoxy-D-xylulose 5-phosphate: step 3/6. Catalyzes the phosphorylation of the position 2 hydroxy group of 4-diphosphocytidyl-2C-methyl-D-erythritol. The chain is 4-diphosphocytidyl-2-C-methyl-D-erythritol kinase from Mycolicibacterium paratuberculosis (strain ATCC BAA-968 / K-10) (Mycobacterium paratuberculosis).